We begin with the raw amino-acid sequence, 216 residues long: Probable GTP-binding protein EngB (216 aa).

Positions 30–204 (DGLEVAFAGR…HDVLARWLGL (175 aa)) constitute an EngB-type G domain. GTP is bound by residues 38–45 (GRSNAGKS), 64–68 (GRTQL), 82–85 (DLPG), 149–152 (TKAD), and 182–185 (LFSA). Ser45 and Thr66 together coordinate Mg(2+).

This sequence belongs to the TRAFAC class TrmE-Era-EngA-EngB-Septin-like GTPase superfamily. EngB GTPase family. Requires Mg(2+) as cofactor.

Functionally, necessary for normal cell division and for the maintenance of normal septation. The protein is Probable GTP-binding protein EngB of Azotobacter vinelandii (strain DJ / ATCC BAA-1303).